A 283-amino-acid polypeptide reads, in one-letter code: Pantothenate synthetase (283 aa).

34-41 (MGALHDGH) lines the ATP pocket. The active-site Proton donor is the His-41. Gln-65 serves as a coordination point for (R)-pantoate. Gln-65 provides a ligand contact to beta-alanine. 152–155 (GEKD) is an ATP binding site. Gln-158 is a (R)-pantoate binding site. ATP-binding positions include Val-181 and 189–192 (MSSR).

Belongs to the pantothenate synthetase family. As to quaternary structure, homodimer.

The protein localises to the cytoplasm. It carries out the reaction (R)-pantoate + beta-alanine + ATP = (R)-pantothenate + AMP + diphosphate + H(+). Its pathway is cofactor biosynthesis; (R)-pantothenate biosynthesis; (R)-pantothenate from (R)-pantoate and beta-alanine: step 1/1. Functionally, catalyzes the condensation of pantoate with beta-alanine in an ATP-dependent reaction via a pantoyl-adenylate intermediate. This is Pantothenate synthetase from Rhodopseudomonas palustris (strain BisB18).